Here is a 1083-residue protein sequence, read N- to C-terminus: RecBCD enzyme subunit RecB (1083 aa).

The UvrD-like helicase ATP-binding domain occupies 1 to 323 (MKVFDLLGPL…QTLGTNWRSD (323 aa)). The tract at residues 1-704 (MKVFDLLGPL…RGRAPGEAIV (704 aa)) is DNA-binding and helicase activity, interacts with RecC. 21–28 (ASAGTGKT) contributes to the ATP binding site. One can recognise a UvrD-like helicase C-terminal domain in the interval 349–607 (VQARHQGHRL…QIMTVWVSKG (259 aa)). The tract at residues 765–1083 (AWKRTSYSGL…LSKLLDAEAP (319 aa)) is nuclease activity, interacts with RecD and RecA. 3 residues coordinate Mg(2+): His-830, Asp-962, and Asp-975. The For nuclease activity role is filled by Asp-975.

Belongs to the helicase family. UvrD subfamily. As to quaternary structure, heterotrimer of RecB, RecC and RecD. All subunits contribute to DNA-binding. Interacts with RecA. It depends on Mg(2+) as a cofactor.

The enzyme catalyses Exonucleolytic cleavage (in the presence of ATP) in either 5'- to 3'- or 3'- to 5'-direction to yield 5'-phosphooligonucleotides.. The catalysed reaction is Couples ATP hydrolysis with the unwinding of duplex DNA by translocating in the 3'-5' direction.. It catalyses the reaction ATP + H2O = ADP + phosphate + H(+). Functionally, a helicase/nuclease that prepares dsDNA breaks (DSB) for recombinational DNA repair. Binds to DSBs and unwinds DNA via a highly rapid and processive ATP-dependent bidirectional helicase activity. Holoenzyme degrades any linearized DNA that is unable to undergo homologous recombination. In the holoenzyme this subunit contributes DNA-dependent ATPase activity, exonuclease activity and 3'-5' helicase activity. Unlike the case in E.coli, suppresses RecA-dependent homologous recombination, is instead required for single-strand annealing pathway repair of DSB. This chain is RecBCD enzyme subunit RecB, found in Mycolicibacterium smegmatis (strain ATCC 700084 / mc(2)155) (Mycobacterium smegmatis).